Consider the following 455-residue polypeptide: MSEFNLKYFGTDGVRGVANKTLTPELAFRLGRTGGAILTRHANDENKKPVVIVGRDTRISGEMLQQAIIAGFLSVGIDVLRLGVITTPAVAFLVQNLEADAGVQITASHNPAADNGIKFFGNDGFKLSDQLEYEIEQLLDESEDTLPRPSADGLGVVNNYPEGVQKYLEFLQKTIPTDLNGMRIALDGANGATSGLLARLFADLGTDFVTLGTEPNGLNINDGVGSTNPAALAELVKENDVQAGLAFDGDGDRLIAVDENGEIVDGDKIMFITGKFLNEQGRLKHNAVVSTVMSNIGFYKALAENDMTSIKTAVGDRYVMEEMIKSDHNLGGEQSGHIIFRDWATTGDGLLTALQLLYVMKETGKKLSELAAPVHIYPQKLVNITVADKEEIQHDPDVIAKIAEVEAQMAGDGRVLVRPSGTEPLLRVMVEAPTQELVEKYTESIANVVREKSGL.

The active-site Phosphoserine intermediate is serine 108. Residues serine 108, aspartate 248, aspartate 250, and aspartate 252 each contribute to the Mg(2+) site. The residue at position 108 (serine 108) is a Phosphoserine.

It belongs to the phosphohexose mutase family. Requires Mg(2+) as cofactor. In terms of processing, activated by phosphorylation.

The enzyme catalyses alpha-D-glucosamine 1-phosphate = D-glucosamine 6-phosphate. Functionally, catalyzes the conversion of glucosamine-6-phosphate to glucosamine-1-phosphate. The sequence is that of Phosphoglucosamine mutase from Leuconostoc mesenteroides subsp. mesenteroides (strain ATCC 8293 / DSM 20343 / BCRC 11652 / CCM 1803 / JCM 6124 / NCDO 523 / NBRC 100496 / NCIMB 8023 / NCTC 12954 / NRRL B-1118 / 37Y).